A 335-amino-acid polypeptide reads, in one-letter code: DNA polymerase beta (335 aa).

K41 is covalently cross-linked (Glycyl lysine isopeptide (Lys-Gly) (interchain with G-Cter in ubiquitin)). K60 contributes to the K(+) binding site. K60 contributes to the Na(+) binding site. Residue K61 forms a Glycyl lysine isopeptide (Lys-Gly) (interchain with G-Cter in ubiquitin) linkage. L62 and V65 together coordinate K(+). Na(+)-binding residues include L62 and V65. The active-site Nucleophile; Schiff-base intermediate with DNA; for 5'-dRP lyase activity is K72. Residue K72 is modified to N6-acetyllysine. A Glycyl lysine isopeptide (Lys-Gly) (interchain with G-Cter in ubiquitin) cross-link involves residue K81. R83 carries the omega-N-methylarginine; by PRMT6 modification. Positions 101, 103, and 106 each coordinate K(+). Positions 101, 103, and 106 each coordinate Na(+). Residue R149 participates in a 2'-deoxyribonucleoside 5'-triphosphate binding. R152 bears the Omega-N-methylarginine; by PRMT6 mark. 4 residues coordinate a 2'-deoxyribonucleoside 5'-triphosphate: S180, R183, G189, and D190. The interval 183-192 (RGAESSGDMD) is DNA-binding. Residues D190, D192, and D256 each contribute to the Mg(2+) site.

This sequence belongs to the DNA polymerase type-X family. Monomer. Binds single-stranded DNA (ssDNA). Interacts with APEX1, LIG1, LIG3, FEN1, PCNA and XRCC1. Interacts with HUWE1/ARF-BP1, STUB1/CHIP and USP47. Interacts with FAM168A. It depends on Mg(2+) as a cofactor. Methylation by PRMT6 stimulates the polymerase activity by enhancing DNA binding and processivity. Post-translationally, ubiquitinated at Lys-41, Lys-61 and Lys-81: monoubiquitinated by HUWE1/ARF-BP1. Monoubiquitinated protein is then the target of STUB1/CHIP, which catalyzes polyubiquitination from monoubiquitin, leading to degradation by the proteasome. USP47 mediates the deubiquitination of monoubiquitinated protein, preventing polyubiquitination by STUB1/CHIP and its subsequent degradation.

The protein resides in the nucleus. The protein localises to the cytoplasm. It carries out the reaction DNA(n) + a 2'-deoxyribonucleoside 5'-triphosphate = DNA(n+1) + diphosphate. It catalyses the reaction a 5'-end 2'-deoxyribose-2'-deoxyribonucleotide-DNA = (2E,4S)-4-hydroxypenten-2-al-5-phosphate + a 5'-end 5'-phospho-2'-deoxyribonucleoside-DNA + H(+). The enzyme catalyses 2'-deoxyribonucleotide-(2'-deoxyribose 5'-phosphate)-2'-deoxyribonucleotide-DNA = a 3'-end 2'-deoxyribonucleotide-(2,3-dehydro-2,3-deoxyribose 5'-phosphate)-DNA + a 5'-end 5'-phospho-2'-deoxyribonucleoside-DNA + H(+). Repair polymerase that plays a key role in base-excision repair. During this process, the damaged base is excised by specific DNA glycosylases, the DNA backbone is nicked at the abasic site by an apurinic/apyrimidic (AP) endonuclease, and POLB removes 5'-deoxyribose-phosphate from the preincised AP site acting as a 5'-deoxyribose-phosphate lyase (5'-dRP lyase); through its DNA polymerase activity, it adds one nucleotide to the 3' end of the arising single-nucleotide gap. Conducts 'gap-filling' DNA synthesis in a stepwise distributive fashion rather than in a processive fashion as for other DNA polymerases. It is also able to cleave sugar-phosphate bonds 3' to an intact AP site, acting as an AP lyase. This chain is DNA polymerase beta (POLB), found in Bos taurus (Bovine).